The chain runs to 383 residues: tRNA pseudouridine synthase B (383 aa).

Catalysis depends on Asp-53, which acts as the Nucleophile.

Belongs to the pseudouridine synthase TruB family. Type 1 subfamily.

The catalysed reaction is uridine(55) in tRNA = pseudouridine(55) in tRNA. Responsible for synthesis of pseudouridine from uracil-55 in the psi GC loop of transfer RNAs. This chain is tRNA pseudouridine synthase B, found in Tropheryma whipplei (strain TW08/27) (Whipple's bacillus).